The sequence spans 191 residues: Large ribosomal subunit protein uL6 (191 aa).

This sequence belongs to the universal ribosomal protein uL6 family. In terms of assembly, part of the 50S ribosomal subunit.

In terms of biological role, this protein binds to the 23S rRNA, and is important in its secondary structure. It is located near the subunit interface in the base of the L7/L12 stalk, and near the tRNA binding site of the peptidyltransferase center. This Gloeobacter violaceus (strain ATCC 29082 / PCC 7421) protein is Large ribosomal subunit protein uL6.